The chain runs to 226 residues: Small ribosomal subunit protein uS3 (226 aa).

In terms of domain architecture, KH type-2 spans 36 to 104; sequence IRKYLENRLS…KIQINIFEIK (69 aa).

Belongs to the universal ribosomal protein uS3 family. As to quaternary structure, part of the 30S ribosomal subunit. Forms a tight complex with proteins S10 and S14.

Functionally, binds the lower part of the 30S subunit head. Binds mRNA in the 70S ribosome, positioning it for translation. This Karelsulcia muelleri (strain GWSS) (Sulcia muelleri) protein is Small ribosomal subunit protein uS3.